Reading from the N-terminus, the 428-residue chain is Elongation factor 1-alpha (428 aa).

A tr-type G domain is found at 5-225; the sequence is KPILNVAFIG…DGFQPPEKPT (221 aa). The G1 stretch occupies residues 14 to 21; it reads GHVDAGKS. 14 to 21 lines the GTP pocket; sequence GHVDAGKS. A Mg(2+)-binding site is contributed by Ser-21. The tract at residues 70 to 74 is G2; it reads GVTID. Residues 91 to 94 are G3; that stretch reads DCPG. Residues 91–95 and 149–152 contribute to the GTP site; these read DCPGH and NKMD. Residues 149-152 are G4; sequence NKMD. The interval 189–191 is G5; the sequence is ASL.

It belongs to the TRAFAC class translation factor GTPase superfamily. Classic translation factor GTPase family. EF-Tu/EF-1A subfamily.

It is found in the cytoplasm. The catalysed reaction is GTP + H2O = GDP + phosphate + H(+). GTP hydrolase that promotes the GTP-dependent binding of aminoacyl-tRNA to the A-site of ribosomes during protein biosynthesis. The protein is Elongation factor 1-alpha of Methanococcus vannielii (strain ATCC 35089 / DSM 1224 / JCM 13029 / OCM 148 / SB).